Consider the following 271-residue polypeptide: Extent of cell elongation protein 1 (271 aa).

Residues 1-18 (MKFSKIACATVFALSSQA) form the signal peptide. Residues 62 to 82 (SIIGIIMGILGNIPQVIQIIM) traverse the membrane as a helical segment.

Polymerizes in solution to form membrane pores. Cleavage by KEX2 generates 8 peptides ECE1-I to ECE1-VIII, all terminating in Lys-Arg. Only peptide ECE1-III, called candidalysin, shows toxin activity.

It is found in the secreted. The protein localises to the host cell membrane. In terms of biological role, secreted protein cleaved by KEX2 in 8 similar peptides (ECE1-I to ECE1-VIII). Stimulates biofilm formation. Functionally, acts as a cytolytic peptide toxin that directly damages host epithelial membranes, triggers a danger response signaling pathway and activates epithelial immunity. Polymerizes in solution to form membrane pores to damage epithelial cells. Induces calcium influx, oxidative stress, mitochondrial dysfunction and ATP depletion in host cells, leading to epithelial necrosis. Serves as a danger signal that potentiates the immune response, and more specifically IL-17 response. Induces cytokine/chemokine secretion by host (especially CCL2/3/4, CXCL1 and S100A8), neutrophil recruitment, and promotes mortality in zebrafish and murine models of systemic fungal infection. Mediates distinct epithelial inflammatory responses through p38, EGFR-ERK and TREM-1/DAP12 pathways. Acts as one of the hypha-derived drivers of NLRP3 inflammasome responses in primary macrophages and thus contributes to the capacity to induce maturation and secretion of IL-1beta from primary macrophages. Stimulates mast cells by mediating cross-talk between signaling pathways activated by the dectin-1 receptor and MAPKs. Enables escape via the gasdermin-mediated pyroptosis, as well as a cell lysis pathway associated with macrophage extracellular trap formation termed ETosis. Acts as the main hemolytic factor of C.albicans. As an exotoxine, also promotes alcohol-associated liver disease or oral carcinogenesis. The chain is Extent of cell elongation protein 1 from Candida albicans (strain SC5314 / ATCC MYA-2876) (Yeast).